Consider the following 464-residue polypeptide: ATP synthase subunit beta (464 aa).

153-160 (GGAGVGKT) provides a ligand contact to ATP.

The protein belongs to the ATPase alpha/beta chains family. F-type ATPases have 2 components, CF(1) - the catalytic core - and CF(0) - the membrane proton channel. CF(1) has five subunits: alpha(3), beta(3), gamma(1), delta(1), epsilon(1). CF(0) has three main subunits: a(1), b(2) and c(9-12). The alpha and beta chains form an alternating ring which encloses part of the gamma chain. CF(1) is attached to CF(0) by a central stalk formed by the gamma and epsilon chains, while a peripheral stalk is formed by the delta and b chains.

It localises to the cell membrane. It catalyses the reaction ATP + H2O + 4 H(+)(in) = ADP + phosphate + 5 H(+)(out). In terms of biological role, produces ATP from ADP in the presence of a proton gradient across the membrane. The catalytic sites are hosted primarily by the beta subunits. This chain is ATP synthase subunit beta, found in Clostridium novyi (strain NT).